The chain runs to 271 residues: Tropinone reductase homolog At2g29360 (271 aa).

22 to 46 provides a ligand contact to NADP(+); it reads LVTGGSKGIGEAVVEELATLGARIH. S155 contacts substrate. The active-site Proton acceptor is Y168.

This sequence belongs to the short-chain dehydrogenases/reductases (SDR) family. SDR65C subfamily.

Its function is as follows. Oxidoreductase active on cyclic ketones, but not on tropinone or nortropinone. In Arabidopsis thaliana (Mouse-ear cress), this protein is Tropinone reductase homolog At2g29360.